Consider the following 388-residue polypeptide: Acyl-CoA dehydrogenase fadE12 (388 aa).

This sequence belongs to the acyl-CoA dehydrogenase family. Requires FAD as cofactor.

The catalysed reaction is a 2,3-saturated acyl-CoA + A = a 2,3-dehydroacyl-CoA + AH2. This chain is Acyl-CoA dehydrogenase fadE12 (fadE12), found in Mycobacterium bovis (strain ATCC BAA-935 / AF2122/97).